The chain runs to 466 residues: Glutamate--tRNA ligase (466 aa).

The 'HIGH' region signature appears at P10–G20. C99, C101, C126, and H128 together coordinate Zn(2+). Positions R237–R241 match the 'KMSKS' region motif. K240 provides a ligand contact to ATP.

The protein belongs to the class-I aminoacyl-tRNA synthetase family. Glutamate--tRNA ligase type 1 subfamily. Monomer. The cofactor is Zn(2+).

The protein localises to the cytoplasm. It catalyses the reaction tRNA(Glu) + L-glutamate + ATP = L-glutamyl-tRNA(Glu) + AMP + diphosphate. In terms of biological role, catalyzes the attachment of glutamate to tRNA(Glu) in a two-step reaction: glutamate is first activated by ATP to form Glu-AMP and then transferred to the acceptor end of tRNA(Glu). In Trichlorobacter lovleyi (strain ATCC BAA-1151 / DSM 17278 / SZ) (Geobacter lovleyi), this protein is Glutamate--tRNA ligase.